Consider the following 182-residue polypeptide: Ribosome-recycling factor (182 aa).

Belongs to the RRF family.

The protein localises to the cytoplasm. Functionally, responsible for the release of ribosomes from messenger RNA at the termination of protein biosynthesis. May increase the efficiency of translation by recycling ribosomes from one round of translation to another. The chain is Ribosome-recycling factor from Prochlorococcus marinus (strain MIT 9313).